Here is a 457-residue protein sequence, read N- to C-terminus: Ribosome biogenesis protein YTM1 (457 aa).

Positions 8–89 are ubiquitin-like (UBL) domain; sequence VKVKFFTREK…ETTLTVEYTR (82 aa). Residues 99 to 457 form a sufficient for interaction with ERB1 and association with 66S pre-ribosomes region; it reads NFNNDDWVSA…INKGDNIFKN (359 aa). WD repeat units follow at residues 101–140, 142–180, 203–241, 282–322, 324–363, 370–410, and 421–457; these read NNDD…EKQY, GHTG…GSVS, GHKA…MTAI, SHTG…CIDT, TTSY…SAKI, GHKN…PMYT, and GVND…IFKN. A disordered region spans residues 172–191; the sequence is TKNDDGSVSNNTGDENDEEN.

This sequence belongs to the WD repeat WDR12/YTM1 family. Component of the NOP7 complex, composed of ERB1, NOP7 and YTM1. The complex is held together by ERB1, which interacts with NOP7 via its N-terminal domain and with YTM1 via a high-affinity interaction between the seven-bladed beta-propeller domains of the 2 proteins. The NOP7 complex associates with the 66S pre-ribosome. Interacts (via UBL domain) with MDN1 (via VWFA/MIDAS domain).

It localises to the nucleus. The protein resides in the nucleolus. The protein localises to the nucleoplasm. Functionally, component of the NOP7 complex, which is required for maturation of the 25S and 5.8S ribosomal RNAs and formation of the 60S ribosome. The sequence is that of Ribosome biogenesis protein YTM1 from Candida glabrata (strain ATCC 2001 / BCRC 20586 / JCM 3761 / NBRC 0622 / NRRL Y-65 / CBS 138) (Yeast).